We begin with the raw amino-acid sequence, 511 residues long: BAR/IMD domain-containing adapter protein 2-like 1 (511 aa).

In terms of domain architecture, IMD spans 1-249 (MSRGPEEVNR…MNMIEEIKTP (249 aa)). Residues 115-154 (MNATLKRYQTEHKNKLESLEKSQAELKKIRRKSQGSRNAL) are a coiled coil. 2 positions are modified to phosphothreonine: T248 and T257. 2 positions are modified to phosphoserine: S261 and S281. The tract at residues 302–328 (NNPATAAPNSQRVNNSTGTSEDPSLQR) is disordered. Residues 303-328 (NPATAAPNSQRVNNSTGTSEDPSLQR) are compositionally biased toward polar residues. 2 positions are modified to phosphoserine: S331 and S354. An SH3 domain is found at 339 to 402 (MKKQKVKTIF…PSSYTKLLEE (64 aa)). Phosphothreonine is present on T412. Phosphoserine occurs at positions 414, 420, and 422. Positions 451-511 (RRADSARTTS…TNDRSAPIIR (61 aa)) are disordered. The segment at 483-511 (PPFLSGENPFATVKLRPTVTNDRSAPIIR) is binds F-actin.

As to quaternary structure, interacts with RAC1. Binds to F-actin. Interacts with FASLG. Interacts (via SH3 domain) with E.coli effector protein EspF(U) (via PXXP motifs). Identified in a complex containing at least WASL, BAIAP2L1 and E.coli EspF(U). Interacts with E.coli intimin receptor Tir. In terms of processing, phosphorylated on tyrosine in response to insulin.

It is found in the cytoplasm. Its subcellular location is the cytoskeleton. Its function is as follows. May function as adapter protein. Involved in the formation of clusters of actin bundles. Plays a role in the reorganization of the actin cytoskeleton in response to bacterial infection. The chain is BAR/IMD domain-containing adapter protein 2-like 1 (BAIAP2L1) from Homo sapiens (Human).